Reading from the N-terminus, the 609-residue chain is Protein KINESIN LIGHT CHAIN-RELATED 1 (609 aa).

A disordered region spans residues 1–77 (MPAMPGLVSV…TAAVIDVDDP (77 aa)). Residues 38–55 (KKTPSSTPSRSKPSPNRS) show a composition bias toward low complexity. TPR repeat units lie at residues 140–173 (AMSLHVLAAIYCSLGRFDEAVPPLERAIQVPDPT), 183–216 (FSGHMQLGDTLSMLGQIDRSIACYEEGLKIQIQT), 225–258 (GETCRYLAEAYVQAMQFNKAEELCKKTLEIHRAH), 267–301 (AADRRLMAIICEAKGDYENALEHLVLASMAMIASG), 307–340 (ASIDVSIGNIYMSLCRFDEAVFSYQKALTVFKAS), 349–382 (ASVFVRLAELYHRTGKLRESKSYCENALRIYNKP), 392–425 (AGGLTEISAIYESVDEPEEALKLLQKSMKLLEDK), 433–466 (AGLEARMGVMYYTVGRYEDARNAFESAVTKLRAA), 474–507 (GVVLNQMGLACVQLFKIDEAGELFEEARGILEQE), and 516–549 (LGVYSNLAATYDAMGRIEDAIEILEQVLKLREEK). Residues 582–609 (LQNLIDPNARPPKKESSAKKWPSLGFKF) form a disordered region.

It belongs to the kinesin light chain family. As to quaternary structure, interacts with IQD1.

The protein localises to the cytoplasm. It localises to the cytoskeleton. The sequence is that of Protein KINESIN LIGHT CHAIN-RELATED 1 from Arabidopsis thaliana (Mouse-ear cress).